A 242-amino-acid chain; its full sequence is Fibrinolytic enzyme, isozyme C (242 aa).

The 242-residue stretch at 1-242 (VIGGTNASPG…YLGWIGDNSR (242 aa)) folds into the Peptidase S1 domain. Residues C29 and C45 are joined by a disulfide bond. Catalysis depends on charge relay system residues H44 and D93. Intrachain disulfides connect C127-C197, C158-C176, and C187-C219. S191 acts as the Charge relay system in catalysis.

The protein belongs to the peptidase S1 family.

This Lumbricus rubellus (Humus earthworm) protein is Fibrinolytic enzyme, isozyme C.